A 261-amino-acid chain; its full sequence is Cytochrome c oxidase subunit 3 (261 aa).

Residues 1 to 15 (MAHQAHAYHMVDPSP) are Mitochondrial matrix-facing. The chain crosses the membrane as a helical span at residues 16–34 (WPLTGAVAALLMSSGLAIW). Residues 35–40 (FHLHSM) lie on the Mitochondrial intermembrane side of the membrane. A helical transmembrane segment spans residues 41-66 (TLIVLGMILLILTMIQWWRDIIREGT). The Mitochondrial matrix segment spans residues 67-72 (FQGHHT). A helical transmembrane segment spans residues 73–105 (PPVQKGLRYGMILFITSEVFFFLGFFWAFYHSS). The Mitochondrial intermembrane portion of the chain corresponds to 106 to 128 (LAPTPELGGCWPPTGLTTLDPFE). A helical membrane pass occupies residues 129–152 (VPLLNTAVLLASGVTVTWAHHSLM). Residues 153-155 (EGE) are Mitochondrial matrix-facing. A helical membrane pass occupies residues 156 to 183 (RKQAIQSLALTILLGLYFTALQAMEYYE). Over 184 to 190 (APFTIAD) the chain is Mitochondrial intermembrane. Residues 191–223 (GVYGSTFFVATGFHGLHVIIGSTFLAVCLLRQV) traverse the membrane as a helical segment. Over 224–232 (LFHFTSDHH) the chain is Mitochondrial matrix. A helical transmembrane segment spans residues 233-256 (FGFEAAAWYWHFVDVVWLFLYVSI). Topologically, residues 257–261 (YWWGS) are mitochondrial intermembrane.

The protein belongs to the cytochrome c oxidase subunit 3 family. As to quaternary structure, component of the cytochrome c oxidase (complex IV, CIV), a multisubunit enzyme composed of 14 subunits. The complex is composed of a catalytic core of 3 subunits MT-CO1, MT-CO2 and MT-CO3, encoded in the mitochondrial DNA, and 11 supernumerary subunits COX4I, COX5A, COX5B, COX6A, COX6B, COX6C, COX7A, COX7B, COX7C, COX8 and NDUFA4, which are encoded in the nuclear genome. The complex exists as a monomer or a dimer and forms supercomplexes (SCs) in the inner mitochondrial membrane with NADH-ubiquinone oxidoreductase (complex I, CI) and ubiquinol-cytochrome c oxidoreductase (cytochrome b-c1 complex, complex III, CIII), resulting in different assemblies (supercomplex SCI(1)III(2)IV(1) and megacomplex MCI(2)III(2)IV(2)).

The protein resides in the mitochondrion inner membrane. It catalyses the reaction 4 Fe(II)-[cytochrome c] + O2 + 8 H(+)(in) = 4 Fe(III)-[cytochrome c] + 2 H2O + 4 H(+)(out). Its function is as follows. Component of the cytochrome c oxidase, the last enzyme in the mitochondrial electron transport chain which drives oxidative phosphorylation. The respiratory chain contains 3 multisubunit complexes succinate dehydrogenase (complex II, CII), ubiquinol-cytochrome c oxidoreductase (cytochrome b-c1 complex, complex III, CIII) and cytochrome c oxidase (complex IV, CIV), that cooperate to transfer electrons derived from NADH and succinate to molecular oxygen, creating an electrochemical gradient over the inner membrane that drives transmembrane transport and the ATP synthase. Cytochrome c oxidase is the component of the respiratory chain that catalyzes the reduction of oxygen to water. Electrons originating from reduced cytochrome c in the intermembrane space (IMS) are transferred via the dinuclear copper A center (CU(A)) of subunit 2 and heme A of subunit 1 to the active site in subunit 1, a binuclear center (BNC) formed by heme A3 and copper B (CU(B)). The BNC reduces molecular oxygen to 2 water molecules using 4 electrons from cytochrome c in the IMS and 4 protons from the mitochondrial matrix. The polypeptide is Cytochrome c oxidase subunit 3 (mt-co3) (Danio rerio (Zebrafish)).